The primary structure comprises 671 residues: DNA ligase (671 aa).

NAD(+) is bound by residues 36 to 40 (DHVYD), 85 to 86 (SM), and E115. K117 serves as the catalytic N6-AMP-lysine intermediate. NAD(+) contacts are provided by R138, E172, K287, and K311. Zn(2+) is bound by residues C405, C408, C423, and C428. In terms of domain architecture, BRCT spans 588–671 (AADNFFKGKT…SKIEEKDTEK (84 aa)).

Belongs to the NAD-dependent DNA ligase family. LigA subfamily. Requires Mg(2+) as cofactor. The cofactor is Mn(2+).

It carries out the reaction NAD(+) + (deoxyribonucleotide)n-3'-hydroxyl + 5'-phospho-(deoxyribonucleotide)m = (deoxyribonucleotide)n+m + AMP + beta-nicotinamide D-nucleotide.. DNA ligase that catalyzes the formation of phosphodiester linkages between 5'-phosphoryl and 3'-hydroxyl groups in double-stranded DNA using NAD as a coenzyme and as the energy source for the reaction. It is essential for DNA replication and repair of damaged DNA. The sequence is that of DNA ligase from Lactobacillus delbrueckii subsp. bulgaricus (strain ATCC 11842 / DSM 20081 / BCRC 10696 / JCM 1002 / NBRC 13953 / NCIMB 11778 / NCTC 12712 / WDCM 00102 / Lb 14).